We begin with the raw amino-acid sequence, 1017 residues long: Dopamine dehydroxylase (1017 aa).

The tat-type signal signal peptide spans 1–34 (MGNLTMSRRTFVKTAAITGAAAAAFGASTHTALA). One can recognise a 4Fe-4S Mo/W bis-MGD-type domain in the interval 45–103 (DTVAVKTCCRGCGKMECGVKVIVQNGRAIRVEGDEGAFQSMGNCCTKSQSSIQAAYHPD). [4Fe-4S] cluster contacts are provided by cysteine 53, cysteine 56, cysteine 61, and cysteine 89. The active-site Electron donor/acceptor is lysine 91.

The protein belongs to the prokaryotic molybdopterin-containing oxidoreductase family. It depends on [4Fe-4S] cluster as a cofactor. Mo-bis(molybdopterin guanine dinucleotide) serves as cofactor. Post-translationally, predicted to be exported by the Tat system. The position of the signal peptide cleavage has not been experimentally proven.

The catalysed reaction is dopamine + AH2 = 3-tyramine + A + H2O. Its function is as follows. Involved in drug metabolism, as part of an interspecies gut bacterial pathway for Levodopa (L-dopa) metabolism, acting on dopamine produced by Enterecoccus L-dopa decarboxylase. Removes the para hydroxyl group of dopamine to produce m-tyramine (3-tyramine). It is possible that dopamine dehydroxylation influences the multiple side effects of L-dopa administration linked to dopamine production in the treatment of Parkinson's disease. The protein is Dopamine dehydroxylase of Eggerthella lenta (Eubacterium lentum).